Reading from the N-terminus, the 262-residue chain is Small ribosomal subunit protein mS23 (262 aa).

Over residues 242-254 (AAEEQETSLDDDA) the composition is skewed to acidic residues. Residues 242-262 (AAEEQETSLDDDATEKVAVAA) form a disordered region.

It belongs to the mitochondrion-specific ribosomal protein mS23 family. As to quaternary structure, component of the mitochondrial small ribosomal subunit.

Its subcellular location is the mitochondrion. This is Small ribosomal subunit protein mS23 (rsm25) from Aspergillus niger (strain ATCC MYA-4892 / CBS 513.88 / FGSC A1513).